We begin with the raw amino-acid sequence, 341 residues long: S-adenosylmethionine:tRNA ribosyltransferase-isomerase (341 aa).

The protein belongs to the QueA family. Monomer.

The protein resides in the cytoplasm. The catalysed reaction is 7-aminomethyl-7-carbaguanosine(34) in tRNA + S-adenosyl-L-methionine = epoxyqueuosine(34) in tRNA + adenine + L-methionine + 2 H(+). Its pathway is tRNA modification; tRNA-queuosine biosynthesis. In terms of biological role, transfers and isomerizes the ribose moiety from AdoMet to the 7-aminomethyl group of 7-deazaguanine (preQ1-tRNA) to give epoxyqueuosine (oQ-tRNA). This chain is S-adenosylmethionine:tRNA ribosyltransferase-isomerase, found in Halothermothrix orenii (strain H 168 / OCM 544 / DSM 9562).